The following is a 517-amino-acid chain: DNA relaxase MbeA (517 aa).

Y19 functions as the O-(5'-phospho-DNA)-tyrosine intermediate in the catalytic mechanism. A divalent metal cation is bound by residues H97, E104, and N106. Disordered stretches follow at residues 281–310, 380–405, and 496–517; these read YSPV…QEGR, PSVR…VTQS, and SLER…SLGW. Over residues 297–310 the composition is skewed to basic and acidic residues; that stretch reads GRGERGDDAAQEGR. Residues 496-510 are compositionally biased toward basic and acidic residues; that stretch reads SLERERQPEIQERTL.

It to E.coli MbaA and MbkA. As to quaternary structure, interacts with MbeB and MbeC to form the relaxosome. Requires Mn(2+) as cofactor. The cofactor is Co(2+). Ni(2+) is required as a cofactor.

The catalysed reaction is ATP-independent breakage of single-stranded DNA, followed by passage and rejoining.. Relaxase involved in plasmid ColE1 conjugative mobilization and is thus essential to promote the specific transfer of the plasmid during conjugation. First catalyzes the specific cleavage of one of the DNA strands at oriT, forming a covalent 5'-phosphotyrosine intermediate. The nic site corresponds to 5'-(1469)CTGG/CTTA(1462)-3' in the cleaved strand. The cleaved strand is then transferred through the dedicated type IV secretion apparatus. MbeA remains covalently linked at the 5' end of the strand, and once in the recipient cell, it probably catalyzes the rejoining of the two ends of the strand, re-forming the circular plasmid DNA. Is functional in vitro without a requirement for the conjugative accessory proteins. The polypeptide is DNA relaxase MbeA (mbeA) (Escherichia coli).